Consider the following 1004-residue polypeptide: MCCTTVVVVRKPATERLKRPSVGRLGLFDPHAAENLALLGWYDYDCREHVDLLWSLSRAPDADAVLRPMVRLFENPATGWDELNAALLTDRGLRGRLFAVLGSSLALGDHLVAHPQSWKLLRGRVSLPSRTQLHQAFDECVSNFGDDPLDAPDSVLPRLRTLYCDQLLVLAALDLAATVEDEPVLPFTLVAAQLADIADAAMATALRVAEKIVCGDRTPPRLAVIAMGKWGARELNYVSDVDIIFVAEQADPLSTRVASEMMRVASEAFFQVDAGLRPEGRNGELVRTVESHIAYYQRWAKTWEFQALLKARSAVGDAELGERYLAALMPMVWAACERADFVAEVQAMRRRVEQLVPADVRGRELKLGSGGLRDVEFAVQLLQLVHGRSDESLHVVSTVDALAALGEGGYIGREDAANLTASYEFLRLLEHRLQLQRLKRTHLLPEDGDEEAVRWLARAAHIRPDGRHDAAGVLREELKNQNLRVSQLHAKLFYQPLLESIGPASLEIRHGMTSEAAERQLATLGYEGSQTALKHISALVNQSGRRGRVQSVLLPRLLNWMSYAPDPDGGLLAYRRLSEALSAETWYLSTLRDKPAVARRLMHVLGTSVYVPDLLMRAPEVIQSYGDGLAGPKLLEAEPAMVARALITSAGRHTDPIRAIDAARSLRRRELARVGSADLLGLLEVTEVCKALTSVWVAVLQAALDAVIRAYLPDGDKAPAAIAVIGMGRLGGAELGYGSDADVMFVCEPAIGVEDAQALRWSGMIAERVCRLLRTPSVDPPLDVDANLRPEGRNGPLVRTLGAYAAYYAQWAQPWEIQALLRAHAVAGDADLGQRFLLMADKMRYPPDGVSAEAVREIRRMKARVEAERLPRGADPHTHTKLGRGGLADIEWTVQLMQLRHAHELPALHKTSTLESLDAIAAANLIPEADVDLLRQAWLTATRARNALVLVRGKTTDQLPGPGRQLNAVAVAAGWPSDDGSEFLDNYLRVTRRAKTFVRKVFGS.

Positions 1–497 (MCCTTVVVVR…LHAKLFYQPL (497 aa)) are adenylyl removase. Residues 502–1004 (GPASLEIRHG…KTFVRKVFGS (503 aa)) are adenylyl transferase.

This sequence belongs to the GlnE family. It depends on Mg(2+) as a cofactor.

It carries out the reaction [glutamine synthetase]-O(4)-(5'-adenylyl)-L-tyrosine + phosphate = [glutamine synthetase]-L-tyrosine + ADP. It catalyses the reaction [glutamine synthetase]-L-tyrosine + ATP = [glutamine synthetase]-O(4)-(5'-adenylyl)-L-tyrosine + diphosphate. Functionally, involved in the regulation of glutamine synthetase GlnA, a key enzyme in the process to assimilate ammonia. When cellular nitrogen levels are high, the C-terminal adenylyl transferase (AT) inactivates GlnA by covalent transfer of an adenylyl group from ATP to specific tyrosine residue of GlnA, thus reducing its activity. Conversely, when nitrogen levels are low, the N-terminal adenylyl removase (AR) activates GlnA by removing the adenylyl group by phosphorolysis, increasing its activity. The regulatory region of GlnE binds the signal transduction protein PII (GlnB) which indicates the nitrogen status of the cell. This chain is Bifunctional glutamine synthetase adenylyltransferase/adenylyl-removing enzyme, found in Mycobacterium leprae (strain TN).